The chain runs to 427 residues: Sensor histidine kinase ArsS (427 aa).

2 helical membrane-spanning segments follow: residues 3–23 (FSIFFKVVALFMITLFSFGAF) and 131–151 (NYFLAITVGLLLILFLFLFVL). The HAMP domain maps to 151–203 (LQSLLPLRELRSQVKPFAQGDKSVSCKSKQKDEIGDLANEFDNCILKINAMNE). The Histidine kinase domain occupies 211–398 (SIMHELRTPI…LSYHYSNGRI (188 aa)). The residue at position 214 (His214) is a Phosphohistidine; by autocatalysis.

Autophosphorylated.

It is found in the membrane. It catalyses the reaction ATP + protein L-histidine = ADP + protein N-phospho-L-histidine.. Functionally, member of the two-component regulatory system ArsS/ArsR that regulates genes involved in biofilm formation and acid adaptation by acting on major ammonia-producing pathways. Functions as a sensor protein kinase which is autophosphorylated at a histidine residue and transfers its phosphate group to the conserved aspartic acid residue in the regulatory domain of ArsR. In turn, ArsR binds to the upstream promoter regions of target genes including ureA, amiE and amiF to positively regulate their expression in response to acidic pH. Also participates in acidic acclimatation in a phosphorylation-independent pathway by regulating acid-induced trafficking of urease and its accessory proteins to the inner membrane. This chain is Sensor histidine kinase ArsS, found in Helicobacter pylori (strain ATCC 700392 / 26695) (Campylobacter pylori).